The primary structure comprises 511 residues: Putative polyol transporter 1 (511 aa).

12 helical membrane passes run 27–47 (FACAILASMTSIILGYDIGVM), 63–83 (VQLEILMGILNIYSLVGSGAA), 94–114 (YTIVLAGAFFFCGALLMGFAT), 124–144 (FVAGIGVGYAMMIAPVYTAEV), 151–171 (GFLTSFPEIFINIGILLGYVS), 186–206 (FMLGVGAVPSVFLAIGVLAMP), 284–304 (ILIACLGIHFAQQASGIDAVV), 324–344 (LATVAVGVVKTLFIVVGTCVV), 351–371 (ALLLTSMGGMFLSLTALGTSL), 384–404 (WAIGLAVTTVMTFVATFSIGA), 424–444 (GASLGVMLNRLMSGIIGMTFL), and 454–474 (GAFLLFAGVAAAAWVFFFTFL).

The protein belongs to the major facilitator superfamily. Sugar transporter (TC 2.A.1.1) family.

It localises to the membrane. Functionally, plasma membrane sugar-proton symporter. This is Putative polyol transporter 1 (PLT1) from Arabidopsis thaliana (Mouse-ear cress).